The primary structure comprises 1480 residues: Heme-responsive zinc finger transcription factor HAP1 (1480 aa).

A compositionally biased stretch (polar residues) spans 1–50 (MSNTPYNSSVPSIASMTQSSVSRSPNMHTATTPGANTSSNSPPLHMSSDS). Residues 1–56 (MSNTPYNSSVPSIASMTQSSVSRSPNMHTATTPGANTSSNSPPLHMSSDSSKIKRK) are disordered. Zn(2+)-binding residues include Cys64, Cys67, Cys74, Cys81, Cys84, and Cys93. The segment at residues 64 to 93 (CTICRKRKVKCDKLRPHCQQCTKTGVAHLC) is a DNA-binding region (zn(2)-C6 fungal-type). A coiled-coil region spans residues 105–134 (EKELLKDNELKKLRERVKSLEKTLSKVHSS). Residues 126–208 (KTLSKVHSSP…ANSSSLSISN (83 aa)) form a disordered region. Over residues 130 to 142 (KVHSSPSSNSLKS) the composition is skewed to low complexity. Polar residues-rich tracts occupy residues 143 to 152 (YNTPESSNLF) and 160 to 176 (TLVNANTGSASSASHMH). Positions 177–208 (QQQQQQQQQEQQQDFSRSANANANSSSLSISN) are enriched in low complexity. Residues 244–441 (KGDPYLKLLW…NTIPHHQPQS (198 aa)) form a heme-responsive; required for HMC formation region. HRM repeat units follow at residues 280 to 285 (KCPINH), 296 to 301 (KCPVDH), 320 to 325 (KCPVDH), 344 to 349 (RCPVDH), 386 to 391 (KCPVDH), and 412 to 417 (RCPIDH). Polar residues-rich tracts occupy residues 429–444 (STHNTIPHHQPQSGSH) and 703–731 (QLNATIPATSQDVSNNGSKKANPSTNPTL). Disordered stretches follow at residues 429 to 456 (STHNTIPHHQPQSGSHARSHPAQSRKHD) and 703 to 764 (QLNA…KENQ). The segment covering 732 to 756 (NNNMSAATTNSSSRSGSADSRSGSN) has biased composition (low complexity). The stretch at 1189-1194 (KCPVYQ) is one HRM 7 repeat. Residues 1381–1408 (TANTDTSANGSALSTLTSPQGSDLASNS) are disordered. Over residues 1385–1408 (DTSANGSALSTLTSPQGSDLASNS) the composition is skewed to polar residues.

In terms of assembly, binds DNA as a homodimer. Interacts with SRO9 and YDJ1. In the absence of heme, binds to at least four cellular proteins, including YDJ1 and SRO9, forming a high-molecular-weight complex (HMC) which results in repression of its activity and dictates its DNA-binding specificity.

It is found in the nucleus. In terms of biological role, regulation of oxygen dependent gene expression. It modulates the expression of Iso-1 (CYP1) and Iso-2 (CYP3) cytochrome c. In response to heme, promotes transcription of genes encoding functions required for respiration, controlling oxidative damage and repression of anaerobic genes. Binds to the sequence 5'-CGGNNNTNNCGG-3'. Is non-functional in terms of iso-1 cytochrome c expression in strain S288c and its derivatives. The polypeptide is Heme-responsive zinc finger transcription factor HAP1 (HAP1) (Saccharomyces cerevisiae (strain Kyokai no. 7 / NBRC 101557) (Baker's yeast)).